Reading from the N-terminus, the 454-residue chain is Asparagine--tRNA ligase (454 aa).

The protein belongs to the class-II aminoacyl-tRNA synthetase family. In terms of assembly, homodimer.

The protein localises to the cytoplasm. It carries out the reaction tRNA(Asn) + L-asparagine + ATP = L-asparaginyl-tRNA(Asn) + AMP + diphosphate + H(+). This Microcystis aeruginosa (strain NIES-843 / IAM M-2473) protein is Asparagine--tRNA ligase.